Here is a 945-residue protein sequence, read N- to C-terminus: Probable inorganic carbon transporter subunit DabA (945 aa).

C408, D410, H651, and C666 together coordinate Zn(2+).

It belongs to the inorganic carbon transporter (TC 9.A.2) DabA family. In terms of assembly, forms a complex with DabB. It depends on Zn(2+) as a cofactor.

The protein localises to the cell inner membrane. Part of an energy-coupled inorganic carbon pump. This Sulfurihydrogenibium azorense (strain DSM 15241 / OCM 825 / Az-Fu1) protein is Probable inorganic carbon transporter subunit DabA.